Consider the following 414-residue polypeptide: tRNA methyltransferase 10 homolog C (414 aa).

The N-terminal 35 residues, 1–35, are a transit peptide targeting the mitochondrion; it reads MNVTVRFLRPFARCLVPYTFHRKRSHLYSGVLQRY. The residue at position 79 (Ser-79) is a Phosphoserine. Residues 133–171 adopt a coiled-coil conformation; the sequence is GKEKAKKAKQVKKEMKAEAREEAKRARLLETTAEEQQQD. The region spanning 186–378 is the SAM-dependent MTase TRM10-type domain; sequence LGWKGVQAMQ…KFVPRRKHTG (193 aa).

It belongs to the class IV-like SAM-binding methyltransferase superfamily. TRM10 family. As to quaternary structure, component of mitochondrial ribonuclease P, a complex composed of TRMT10C/MRPP1, HSD17B10/MRPP2 and PRORP/MRPP3. Interacts with HSD17B10/MRPP2; forming the MRPP1-MRPP2 subcomplex of the mitochondrial ribonuclease P complex. Interacts with GRSF1.

The protein localises to the mitochondrion matrix. It localises to the mitochondrion nucleoid. The enzyme catalyses adenosine(9) in tRNA + S-adenosyl-L-methionine = N(1)-methyladenosine(9) in tRNA + S-adenosyl-L-homocysteine + H(+). The catalysed reaction is guanosine(9) in tRNA + S-adenosyl-L-methionine = N(1)-methylguanosine(9) in tRNA + S-adenosyl-L-homocysteine + H(+). It catalyses the reaction an adenosine in mRNA + S-adenosyl-L-methionine = an N(1)-methyladenosine in mRNA + S-adenosyl-L-homocysteine + H(+). Mitochondrial tRNA N(1)-methyltransferase involved in mitochondrial tRNA maturation. Component of mitochondrial ribonuclease P, a complex composed of TRMT10C/MRPP1, HSD17B10/MRPP2 and PRORP/MRPP3, which cleaves tRNA molecules in their 5'-ends. Together with HSD17B10/MRPP2, forms a subcomplex of the mitochondrial ribonuclease P, named MRPP1-MRPP2 subcomplex, which displays functions that are independent of the ribonuclease P activity. The MRPP1-MRPP2 subcomplex catalyzes the formation of N(1)-methylguanine and N(1)-methyladenine at position 9 (m1G9 and m1A9, respectively) in tRNAs; TRMT10C/MRPP1 acting as the catalytic N(1)-methyltransferase subunit. The MRPP1-MRPP2 subcomplex also acts as a tRNA maturation platform: following 5'-end cleavage by the mitochondrial ribonuclease P complex, the MRPP1-MRPP2 subcomplex enhances the efficiency of 3'-processing catalyzed by ELAC2, retains the tRNA product after ELAC2 processing and presents the nascent tRNA to the mitochondrial CCA tRNA nucleotidyltransferase TRNT1 enzyme. In addition to tRNA N(1)-methyltransferase activity, TRMT10C/MRPP1 also acts as a mRNA N(1)-methyltransferase by mediating methylation of adenosine residues at the N(1) position of MT-ND5 mRNA. Associates with mitochondrial DNA complexes at the nucleoids to initiate RNA processing and ribosome assembly. The sequence is that of tRNA methyltransferase 10 homolog C from Mus musculus (Mouse).